The primary structure comprises 268 residues: Cyclohexadienyl dehydratase (268 aa).

Positions 1–25 are cleaved as a signal peptide; that stretch reads MPKSFRHLVQALACLALLASASLQA.

It belongs to the bacterial solute-binding protein 3 family. In terms of assembly, homodimer.

The protein resides in the periplasm. It catalyses the reaction prephenate + H(+) = 3-phenylpyruvate + CO2 + H2O. It carries out the reaction L-arogenate + H(+) = L-phenylalanine + CO2 + H2O. It participates in amino-acid biosynthesis; L-phenylalanine biosynthesis; L-phenylalanine from L-arogenate: step 1/1. Its pathway is amino-acid biosynthesis; L-phenylalanine biosynthesis; phenylpyruvate from prephenate: step 1/1. Functionally, forms alternative pathway for phenylalanine biosynthesis. Can catalyze two reactions: prephenate dehydratase and arogenate dehydratase. May have a role in chemotaxis or transport. The protein is Cyclohexadienyl dehydratase (pheC) of Pseudomonas aeruginosa (strain ATCC 15692 / DSM 22644 / CIP 104116 / JCM 14847 / LMG 12228 / 1C / PRS 101 / PAO1).